The following is a 460-amino-acid chain: Receptor-like cytosolic serine/threonine-protein kinase RBK2 (460 aa).

The tract at residues methionine 1–asparagine 67 is disordered. Residues histidine 7–serine 23 are compositionally biased toward basic and acidic residues. The Protein kinase domain maps to phenylalanine 143–valine 415. ATP is bound by residues isoleucine 149 to valine 157 and lysine 171. The Proton acceptor role is filled by aspartate 267. Position 307 is a phosphothreonine (threonine 307). A Phosphotyrosine modification is found at tyrosine 315.

This sequence belongs to the protein kinase superfamily. Ser/Thr protein kinase family. Interacts with ARAC5 and ARAC10.

Its subcellular location is the cytoplasm. The catalysed reaction is L-seryl-[protein] + ATP = O-phospho-L-seryl-[protein] + ADP + H(+). It carries out the reaction L-threonyl-[protein] + ATP = O-phospho-L-threonyl-[protein] + ADP + H(+). This Arabidopsis thaliana (Mouse-ear cress) protein is Receptor-like cytosolic serine/threonine-protein kinase RBK2 (RBK2).